The following is a 290-amino-acid chain: MQVASVLSRGLPYIQRFTGKTVVIKYGGNAMENEDLKSSFARDVVLMKLVGINPIVVHGGGPQIGELLERLNIQSRFVNGMRVTDAETMDVVEMVLGGQVNKEIVSLINAHGGTAVGLTGKDANLIRARKLEVVNRSPELERPEIIDIGHVGEVASVNVDVIDMLTRSNVIPVIAPIGVGPDGASYNINADLVAGKVAEAMKAEKLILLTNVSGLKSKEDKVLTGLTAQQVNDLIEDGTIHGGMLPKIRCALSAVENGVRTSHIIDGRVAHACLLEIFTDEGVGTLISRN.

Residues 60-61, arginine 82, and asparagine 187 contribute to the substrate site; that span reads GG.

It belongs to the acetylglutamate kinase family. ArgB subfamily.

The protein resides in the cytoplasm. It catalyses the reaction N-acetyl-L-glutamate + ATP = N-acetyl-L-glutamyl 5-phosphate + ADP. Its pathway is amino-acid biosynthesis; L-arginine biosynthesis; N(2)-acetyl-L-ornithine from L-glutamate: step 2/4. Its function is as follows. Catalyzes the ATP-dependent phosphorylation of N-acetyl-L-glutamate. The protein is Acetylglutamate kinase of Marinobacter nauticus (strain ATCC 700491 / DSM 11845 / VT8) (Marinobacter aquaeolei).